The chain runs to 252 residues: E3 ubiquitin-protein ligase MARCHF3 (252 aa).

An RING-CH-type zinc finger spans residues 62–122 (SSFNDHPMCR…ELCHFRFSVE (61 aa)). 8 residues coordinate Zn(2+): Cys70, Cys73, Cys86, Cys88, His96, Cys99, Cys112, and Cys115. The next 2 helical transmembrane spans lie at 144–164 (LFGD…SGWL) and 181–201 (AVGL…WTLV).

The protein localises to the cytoplasmic vesicle membrane. Its subcellular location is the early endosome membrane. The catalysed reaction is S-ubiquitinyl-[E2 ubiquitin-conjugating enzyme]-L-cysteine + [acceptor protein]-L-lysine = [E2 ubiquitin-conjugating enzyme]-L-cysteine + N(6)-ubiquitinyl-[acceptor protein]-L-lysine.. The protein operates within protein modification; protein ubiquitination. Functionally, E3 ubiquitin-protein ligase which may be involved in endosomal trafficking. E3 ubiquitin ligases accept ubiquitin from an E2 ubiquitin-conjugating enzyme in the form of a thioester and then directly transfer the ubiquitin to targeted substrates. The polypeptide is E3 ubiquitin-protein ligase MARCHF3 (marchf3) (Xenopus laevis (African clawed frog)).